The sequence spans 670 residues: Eukaryotic translation initiation factor 3 subunit B (670 aa).

Positions 30 to 116 (KFIVVDNIPV…HTLKVNLLDD (87 aa)) constitute an RRM domain. 4 WD repeats span residues 183–221 (SVSL…QVNL), 222–269 (FEHR…KLRS), 466–507 (LENR…SYGT), and 509–553 (EHLQ…VYSV). Residues 568 to 600 (KFMLTNKEINQIKQNIKKYQEKFDKQDEDDNKA) are a coiled coil.

This sequence belongs to the eIF-3 subunit B family. In terms of assembly, component of the eukaryotic translation initiation factor 3 (eIF-3) complex.

It localises to the cytoplasm. In terms of biological role, RNA-binding component of the eukaryotic translation initiation factor 3 (eIF-3) complex, which is involved in protein synthesis of a specialized repertoire of mRNAs and, together with other initiation factors, stimulates binding of mRNA and methionyl-tRNAi to the 40S ribosome. The eIF-3 complex specifically targets and initiates translation of a subset of mRNAs involved in cell proliferation. This Dictyostelium discoideum (Social amoeba) protein is Eukaryotic translation initiation factor 3 subunit B (eif3B).